Consider the following 148-residue polypeptide: Ribonuclease pancreatic (148 aa).

The first 25 residues, 1–25 (MGLEKSLILFPLLVLVVGWVQPSLG), serve as a signal peptide directing secretion. Residues Lys32, Arg35, 65–69 (KPVNT), Lys90, and Arg109 each bind substrate. Disulfide bonds link Cys50-Cys108, Cys64-Cys119, Cys82-Cys134, and Cys89-Cys96. Catalysis depends on His143, which acts as the Proton donor.

This sequence belongs to the pancreatic ribonuclease family. As to quaternary structure, monomer. Interacts with and forms tight 1:1 complexes with RNH1. Dimerization of two such complexes may occur. Interaction with RNH1 inhibits this protein. Pancreas.

Its subcellular location is the secreted. The catalysed reaction is an [RNA] containing cytidine + H2O = an [RNA]-3'-cytidine-3'-phosphate + a 5'-hydroxy-ribonucleotide-3'-[RNA].. It carries out the reaction an [RNA] containing uridine + H2O = an [RNA]-3'-uridine-3'-phosphate + a 5'-hydroxy-ribonucleotide-3'-[RNA].. In terms of biological role, endonuclease that catalyzes the cleavage of RNA on the 3' side of pyrimidine nucleotides. Acts on single-stranded and double-stranded RNA. The protein is Ribonuclease pancreatic (RNASE1) of Peromyscus leucopus (White-footed mouse).